The primary structure comprises 495 residues: Glutamyl-tRNA(Gln) amidotransferase subunit A (495 aa).

Residues K78 and S158 each act as charge relay system in the active site. S182 functions as the Acyl-ester intermediate in the catalytic mechanism.

This sequence belongs to the amidase family. GatA subfamily. Heterotrimer of A, B and C subunits.

It catalyses the reaction L-glutamyl-tRNA(Gln) + L-glutamine + ATP + H2O = L-glutaminyl-tRNA(Gln) + L-glutamate + ADP + phosphate + H(+). Its function is as follows. Allows the formation of correctly charged Gln-tRNA(Gln) through the transamidation of misacylated Glu-tRNA(Gln) in organisms which lack glutaminyl-tRNA synthetase. The reaction takes place in the presence of glutamine and ATP through an activated gamma-phospho-Glu-tRNA(Gln). The chain is Glutamyl-tRNA(Gln) amidotransferase subunit A from Roseobacter denitrificans (strain ATCC 33942 / OCh 114) (Erythrobacter sp. (strain OCh 114)).